A 422-amino-acid chain; its full sequence is 3-isopropylmalate dehydratase large subunit (422 aa).

[4Fe-4S] cluster-binding residues include Cys-303, Cys-363, and Cys-366.

The protein belongs to the aconitase/IPM isomerase family. LeuC type 2 subfamily. In terms of assembly, heterodimer of LeuC and LeuD. [4Fe-4S] cluster serves as cofactor.

It catalyses the reaction (2R,3S)-3-isopropylmalate = (2S)-2-isopropylmalate. Its pathway is amino-acid biosynthesis; L-leucine biosynthesis; L-leucine from 3-methyl-2-oxobutanoate: step 2/4. Functionally, catalyzes the isomerization between 2-isopropylmalate and 3-isopropylmalate, via the formation of 2-isopropylmaleate. The polypeptide is 3-isopropylmalate dehydratase large subunit (Wolinella succinogenes (strain ATCC 29543 / DSM 1740 / CCUG 13145 / JCM 31913 / LMG 7466 / NCTC 11488 / FDC 602W) (Vibrio succinogenes)).